Consider the following 328-residue polypeptide: Cell division protein ZipA (328 aa).

Topologically, residues 1 to 4 are periplasmic; the sequence is MDLN. A helical membrane pass occupies residues 5–25; that stretch reads TILIIVGIVALVALIVHGLWS. Residues 26-328 lie on the Cytoplasmic side of the membrane; sequence NRREKSKYFD…NAEQAYLARV (303 aa). Residues 43–82 are disordered; it reads TSLTSRSHTQEEMAQPNNISPNTYVENGHTPIPQPTTEKV. Polar residues predominate over residues 57 to 67; it reads QPNNISPNTYV.

Belongs to the ZipA family. As to quaternary structure, interacts with FtsZ via their C-terminal domains.

It is found in the cell inner membrane. Essential cell division protein that stabilizes the FtsZ protofilaments by cross-linking them and that serves as a cytoplasmic membrane anchor for the Z ring. Also required for the recruitment to the septal ring of downstream cell division proteins. The polypeptide is Cell division protein ZipA (Haemophilus influenzae (strain PittEE)).